The chain runs to 398 residues: Phosphoglycerate kinase (398 aa).

Substrate is bound by residues 21 to 23 (DFN), Arg-36, 59 to 62 (HLGR), Arg-119, and Arg-157. Residues Lys-208, Gly-296, Glu-327, and 354–357 (GGDS) contribute to the ATP site.

Belongs to the phosphoglycerate kinase family. Monomer.

Its subcellular location is the cytoplasm. It carries out the reaction (2R)-3-phosphoglycerate + ATP = (2R)-3-phospho-glyceroyl phosphate + ADP. Its pathway is carbohydrate degradation; glycolysis; pyruvate from D-glyceraldehyde 3-phosphate: step 2/5. This is Phosphoglycerate kinase from Streptococcus pneumoniae serotype 2 (strain D39 / NCTC 7466).